Consider the following 110-residue polypeptide: Insulin (110 aa).

An N-terminal signal peptide occupies residues 1-24 (MASLAALLPLLALLVLCRLDPAQA). Cystine bridges form between C31–C96, C43–C109, and C95–C100. The propeptide at 57 to 87 (EVEELQVGQAELGGGPGAGGLQPSALELALQ) is c peptide.

Belongs to the insulin family. As to quaternary structure, heterodimer of a B chain and an A chain linked by two disulfide bonds.

It localises to the secreted. Its function is as follows. Insulin decreases blood glucose concentration. It increases cell permeability to monosaccharides, amino acids and fatty acids. It accelerates glycolysis, the pentose phosphate cycle, and glycogen synthesis in liver. The chain is Insulin (INS) from Oryctolagus cuniculus (Rabbit).